Consider the following 274-residue polypeptide: 2,3,4,5-tetrahydropyridine-2,6-dicarboxylate N-succinyltransferase (274 aa).

Substrate contacts are provided by Arg-104 and Asp-141.

Belongs to the transferase hexapeptide repeat family. As to quaternary structure, homotrimer.

It is found in the cytoplasm. It carries out the reaction (S)-2,3,4,5-tetrahydrodipicolinate + succinyl-CoA + H2O = (S)-2-succinylamino-6-oxoheptanedioate + CoA. It participates in amino-acid biosynthesis; L-lysine biosynthesis via DAP pathway; LL-2,6-diaminopimelate from (S)-tetrahydrodipicolinate (succinylase route): step 1/3. In Wigglesworthia glossinidia brevipalpis, this protein is 2,3,4,5-tetrahydropyridine-2,6-dicarboxylate N-succinyltransferase.